Consider the following 441-residue polypeptide: Serine--tRNA ligase (441 aa).

250-252 contacts L-serine; that stretch reads TSE. ATP-binding positions include 281–283 and valine 297; that span reads RRE. Position 304 (glutamate 304) interacts with L-serine. An ATP-binding site is contributed by 368–371; it reads EIVS. Threonine 402 provides a ligand contact to L-serine.

It belongs to the class-II aminoacyl-tRNA synthetase family. Type-1 seryl-tRNA synthetase subfamily. In terms of assembly, homodimer. The tRNA molecule binds across the dimer.

Its subcellular location is the cytoplasm. It catalyses the reaction tRNA(Ser) + L-serine + ATP = L-seryl-tRNA(Ser) + AMP + diphosphate + H(+). The enzyme catalyses tRNA(Sec) + L-serine + ATP = L-seryl-tRNA(Sec) + AMP + diphosphate + H(+). It participates in aminoacyl-tRNA biosynthesis; selenocysteinyl-tRNA(Sec) biosynthesis; L-seryl-tRNA(Sec) from L-serine and tRNA(Sec): step 1/1. In terms of biological role, catalyzes the attachment of serine to tRNA(Ser). Is also able to aminoacylate tRNA(Sec) with serine, to form the misacylated tRNA L-seryl-tRNA(Sec), which will be further converted into selenocysteinyl-tRNA(Sec). The protein is Serine--tRNA ligase of Thermoplasma volcanium (strain ATCC 51530 / DSM 4299 / JCM 9571 / NBRC 15438 / GSS1).